We begin with the raw amino-acid sequence, 270 residues long: Aliphatic sulfonates import ATP-binding protein SsuB (270 aa).

One can recognise an ABC transporter domain in the interval 17 to 238; it reads LAANDLRRTF…VRGSHRLAAL (222 aa). 49–56 provides a ligand contact to ATP; that stretch reads GRSGCGKS. The disordered stretch occupies residues 250 to 270; it reads PGTPPEPEPVAPLPTHLRWAH. A compositionally biased stretch (pro residues) spans 251–261; sequence GTPPEPEPVAP.

It belongs to the ABC transporter superfamily. Aliphatic sulfonates importer (TC 3.A.1.17.2) family. The complex is composed of two ATP-binding proteins (SsuB), two transmembrane proteins (SsuC) and a solute-binding protein (SsuA).

The protein localises to the cell inner membrane. It carries out the reaction ATP + H2O + aliphatic sulfonate-[sulfonate-binding protein]Side 1 = ADP + phosphate + aliphatic sulfonateSide 2 + [sulfonate-binding protein]Side 1.. Part of the ABC transporter complex SsuABC involved in aliphatic sulfonates import. Responsible for energy coupling to the transport system. The protein is Aliphatic sulfonates import ATP-binding protein SsuB of Pseudomonas entomophila (strain L48).